The chain runs to 570 residues: Dihydroxy-acid dehydratase (570 aa).

[2Fe-2S] cluster is bound at residue C61. Position 94 (D94) interacts with Mg(2+). C135 serves as a coordination point for [2Fe-2S] cluster. The Mg(2+) site is built by D136 and K137. K137 is subject to N6-carboxylysine. [2Fe-2S] cluster is bound at residue C207. Mg(2+) is bound at residue E459. Residue S485 is the Proton acceptor of the active site.

It belongs to the IlvD/Edd family. In terms of assembly, homodimer. [2Fe-2S] cluster is required as a cofactor. Mg(2+) serves as cofactor.

It carries out the reaction (2R)-2,3-dihydroxy-3-methylbutanoate = 3-methyl-2-oxobutanoate + H2O. The enzyme catalyses (2R,3R)-2,3-dihydroxy-3-methylpentanoate = (S)-3-methyl-2-oxopentanoate + H2O. Its pathway is amino-acid biosynthesis; L-isoleucine biosynthesis; L-isoleucine from 2-oxobutanoate: step 3/4. The protein operates within amino-acid biosynthesis; L-valine biosynthesis; L-valine from pyruvate: step 3/4. Functions in the biosynthesis of branched-chain amino acids. Catalyzes the dehydration of (2R,3R)-2,3-dihydroxy-3-methylpentanoate (2,3-dihydroxy-3-methylvalerate) into 2-oxo-3-methylpentanoate (2-oxo-3-methylvalerate) and of (2R)-2,3-dihydroxy-3-methylbutanoate (2,3-dihydroxyisovalerate) into 2-oxo-3-methylbutanoate (2-oxoisovalerate), the penultimate precursor to L-isoleucine and L-valine, respectively. This Lactococcus lactis subsp. cremoris (strain MG1363) protein is Dihydroxy-acid dehydratase.